Reading from the N-terminus, the 575-residue chain is Dihydroxy-acid dehydratase (575 aa).

A disordered region spans residues 1–25 (MPTTDSARAADIKQPDIKPRSRDVT). The span at 8–25 (RAADIKQPDIKPRSRDVT) shows a compositional bias: basic and acidic residues. C64 provides a ligand contact to [2Fe-2S] cluster. A Mg(2+)-binding site is contributed by D96. C137 provides a ligand contact to [2Fe-2S] cluster. Positions 138 and 139 each coordinate Mg(2+). K139 bears the N6-carboxylysine mark. A [2Fe-2S] cluster-binding site is contributed by C214. E465 lines the Mg(2+) pocket. The active-site Proton acceptor is S491.

The protein belongs to the IlvD/Edd family. Homodimer. It depends on [2Fe-2S] cluster as a cofactor. Requires Mg(2+) as cofactor.

It carries out the reaction (2R)-2,3-dihydroxy-3-methylbutanoate = 3-methyl-2-oxobutanoate + H2O. The catalysed reaction is (2R,3R)-2,3-dihydroxy-3-methylpentanoate = (S)-3-methyl-2-oxopentanoate + H2O. The protein operates within amino-acid biosynthesis; L-isoleucine biosynthesis; L-isoleucine from 2-oxobutanoate: step 3/4. Its pathway is amino-acid biosynthesis; L-valine biosynthesis; L-valine from pyruvate: step 3/4. Its function is as follows. Functions in the biosynthesis of branched-chain amino acids. Catalyzes the dehydration of (2R,3R)-2,3-dihydroxy-3-methylpentanoate (2,3-dihydroxy-3-methylvalerate) into 2-oxo-3-methylpentanoate (2-oxo-3-methylvalerate) and of (2R)-2,3-dihydroxy-3-methylbutanoate (2,3-dihydroxyisovalerate) into 2-oxo-3-methylbutanoate (2-oxoisovalerate), the penultimate precursor to L-isoleucine and L-valine, respectively. The chain is Dihydroxy-acid dehydratase from Mycolicibacterium paratuberculosis (strain ATCC BAA-968 / K-10) (Mycobacterium paratuberculosis).